A 258-amino-acid chain; its full sequence is Indole-3-glycerol phosphate synthase 2 (258 aa).

The protein belongs to the TrpC family.

The enzyme catalyses 1-(2-carboxyphenylamino)-1-deoxy-D-ribulose 5-phosphate + H(+) = (1S,2R)-1-C-(indol-3-yl)glycerol 3-phosphate + CO2 + H2O. Its pathway is amino-acid biosynthesis; L-tryptophan biosynthesis; L-tryptophan from chorismate: step 4/5. Functionally, the function of the second trp operon in S.coelicolor is to produce tryptophan for the biosynthesis of calcium-dependent antibiotic (CDA). The chain is Indole-3-glycerol phosphate synthase 2 (trpC2) from Streptomyces coelicolor (strain ATCC BAA-471 / A3(2) / M145).